The primary structure comprises 121 residues: MDYRFGRQYRLLKTDDFSSVFAFRNRRSRDLLQVSRSNGNGLDHPRIGLVVGKKTAKRANERNYMKRVIRDWFRLNKNRLPPQDFVVRVRRKFDRATAKQARAELAQLMFGNPATGCRKQA.

Belongs to the RnpA family. As to quaternary structure, consists of a catalytic RNA component (M1 or rnpB) and a protein subunit.

It catalyses the reaction Endonucleolytic cleavage of RNA, removing 5'-extranucleotides from tRNA precursor.. Functionally, RNaseP catalyzes the removal of the 5'-leader sequence from pre-tRNA to produce the mature 5'-terminus. It can also cleave other RNA substrates such as 4.5S RNA. The protein component plays an auxiliary but essential role in vivo by binding to the 5'-leader sequence and broadening the substrate specificity of the ribozyme. The sequence is that of Ribonuclease P protein component from Neisseria meningitidis serogroup A / serotype 4A (strain DSM 15465 / Z2491).